We begin with the raw amino-acid sequence, 90 residues long: Small ribosomal subunit protein uS15 (90 aa).

Belongs to the universal ribosomal protein uS15 family. As to quaternary structure, part of the 30S ribosomal subunit. Forms a bridge to the 50S subunit in the 70S ribosome, contacting the 23S rRNA.

In terms of biological role, one of the primary rRNA binding proteins, it binds directly to 16S rRNA where it helps nucleate assembly of the platform of the 30S subunit by binding and bridging several RNA helices of the 16S rRNA. Its function is as follows. Forms an intersubunit bridge (bridge B4) with the 23S rRNA of the 50S subunit in the ribosome. This is Small ribosomal subunit protein uS15 from Paraburkholderia xenovorans (strain LB400).